The primary structure comprises 240 residues: UDP-2,3-diacylglucosamine hydrolase (240 aa).

Residues aspartate 8, histidine 10, aspartate 41, asparagine 79, and histidine 114 each coordinate Mn(2+). 79-80 (NR) provides a ligand contact to substrate. Substrate contacts are provided by aspartate 122, serine 160, asparagine 164, lysine 167, and histidine 195. Mn(2+) contacts are provided by histidine 195 and histidine 197.

Belongs to the LpxH family. It depends on Mn(2+) as a cofactor.

It is found in the cell inner membrane. It carries out the reaction UDP-2-N,3-O-bis[(3R)-3-hydroxytetradecanoyl]-alpha-D-glucosamine + H2O = 2-N,3-O-bis[(3R)-3-hydroxytetradecanoyl]-alpha-D-glucosaminyl 1-phosphate + UMP + 2 H(+). It functions in the pathway glycolipid biosynthesis; lipid IV(A) biosynthesis; lipid IV(A) from (3R)-3-hydroxytetradecanoyl-[acyl-carrier-protein] and UDP-N-acetyl-alpha-D-glucosamine: step 4/6. Functionally, hydrolyzes the pyrophosphate bond of UDP-2,3-diacylglucosamine to yield 2,3-diacylglucosamine 1-phosphate (lipid X) and UMP by catalyzing the attack of water at the alpha-P atom. Involved in the biosynthesis of lipid A, a phosphorylated glycolipid that anchors the lipopolysaccharide to the outer membrane of the cell. The protein is UDP-2,3-diacylglucosamine hydrolase of Shigella sonnei (strain Ss046).